The sequence spans 172 residues: Adenine phosphoribosyltransferase (172 aa).

The protein belongs to the purine/pyrimidine phosphoribosyltransferase family. In terms of assembly, homodimer.

The protein resides in the cytoplasm. It catalyses the reaction AMP + diphosphate = 5-phospho-alpha-D-ribose 1-diphosphate + adenine. It functions in the pathway purine metabolism; AMP biosynthesis via salvage pathway; AMP from adenine: step 1/1. Its function is as follows. Catalyzes a salvage reaction resulting in the formation of AMP, that is energically less costly than de novo synthesis. The polypeptide is Adenine phosphoribosyltransferase (Prochlorococcus marinus (strain NATL1A)).